The chain runs to 335 residues: Phosphate acyltransferase (335 aa).

The protein belongs to the PlsX family. In terms of assembly, homodimer. Probably interacts with PlsY.

The protein localises to the cytoplasm. The catalysed reaction is a fatty acyl-[ACP] + phosphate = an acyl phosphate + holo-[ACP]. It participates in lipid metabolism; phospholipid metabolism. Catalyzes the reversible formation of acyl-phosphate (acyl-PO(4)) from acyl-[acyl-carrier-protein] (acyl-ACP). This enzyme utilizes acyl-ACP as fatty acyl donor, but not acyl-CoA. In Streptococcus equi subsp. equi (strain 4047), this protein is Phosphate acyltransferase.